The sequence spans 101 residues: Alkene monooxygenase system, effector subunit (101 aa).

Belongs to the TmoD/XamoD family. As to quaternary structure, monomer. The alkene monooxygenase multicomponent enzyme system is composed of an electron transfer component and a monooxygenase component interacting with the effector protein XamoD. The electron transfer component is composed of a ferredoxin reductase (XamoF) and a ferredoxin (XamoC), and the monooxygenase component is formed by a heterohexamer (dimer of heterotrimers) of two alpha subunits (XamoA), two beta subunits (XamoE) and two gamma subunits (XamoB).

Its subcellular location is the cytoplasm. Functionally, effector component of the alkene monooxygenase multicomponent enzyme system which catalyzes the O2- and NADH-dependent epoxidation of short chain (C2 to C6) alkenes to their corresponding epoxides. One possible role of this small protein might be to facilitate electron transfer between the reductase and ferredoxin components. The polypeptide is Alkene monooxygenase system, effector subunit (Xanthobacter autotrophicus (strain ATCC BAA-1158 / Py2)).